The following is a 370-amino-acid chain: Anthranilate phosphoribosyltransferase (370 aa).

5-phospho-alpha-D-ribose 1-diphosphate contacts are provided by residues G82, 85-86, T90, 92-95, 110-118, and S122; these read GD, NVST, and KHGNRAATS. Position 82 (G82) interacts with anthranilate. S94 contacts Mg(2+). N113 is an anthranilate binding site. R168 is a binding site for anthranilate. Mg(2+) is bound by residues D226 and E227.

Belongs to the anthranilate phosphoribosyltransferase family. Homodimer. The cofactor is Mg(2+).

The catalysed reaction is N-(5-phospho-beta-D-ribosyl)anthranilate + diphosphate = 5-phospho-alpha-D-ribose 1-diphosphate + anthranilate. It functions in the pathway amino-acid biosynthesis; L-tryptophan biosynthesis; L-tryptophan from chorismate: step 2/5. Functionally, catalyzes the transfer of the phosphoribosyl group of 5-phosphorylribose-1-pyrophosphate (PRPP) to anthranilate to yield N-(5'-phosphoribosyl)-anthranilate (PRA). This Methanosarcina acetivorans (strain ATCC 35395 / DSM 2834 / JCM 12185 / C2A) protein is Anthranilate phosphoribosyltransferase.